Reading from the N-terminus, the 340-residue chain is Ferrochelatase (340 aa).

Positions 189 and 292 each coordinate Fe cation.

This sequence belongs to the ferrochelatase family.

It is found in the cytoplasm. It catalyses the reaction heme b + 2 H(+) = protoporphyrin IX + Fe(2+). The protein operates within porphyrin-containing compound metabolism; protoheme biosynthesis; protoheme from protoporphyrin-IX: step 1/1. In terms of biological role, catalyzes the ferrous insertion into protoporphyrin IX. This Pseudomonas savastanoi pv. phaseolicola (strain 1448A / Race 6) (Pseudomonas syringae pv. phaseolicola (strain 1448A / Race 6)) protein is Ferrochelatase.